The following is a 304-amino-acid chain: Ribonuclease HII (304 aa).

The segment at 1–53 (MIRDTKQPIKVPAKPASRSGGKAKTVKPKTVKPKAVKAADGKAASAKASTSKA) is disordered. The segment covering 24-35 (KTVKPKTVKPKA) has biased composition (basic residues). Residues 36–53 (VKAADGKAASAKASTSKA) show a composition bias toward low complexity. Residues 96-284 (WPIAGCDEAG…VAAAWQKIEG (189 aa)) form the RNase H type-2 domain. 3 residues coordinate a divalent metal cation: aspartate 102, glutamate 103, and aspartate 193.

Belongs to the RNase HII family. Requires Mn(2+) as cofactor. Mg(2+) is required as a cofactor.

It is found in the cytoplasm. It carries out the reaction Endonucleolytic cleavage to 5'-phosphomonoester.. Functionally, endonuclease that specifically degrades the RNA of RNA-DNA hybrids. In Rhodopseudomonas palustris (strain ATCC BAA-98 / CGA009), this protein is Ribonuclease HII.